The primary structure comprises 115 residues: NADH-ubiquinone oxidoreductase chain 3 (115 aa).

Helical transmembrane passes span Met-4–Leu-24, Phe-55–Leu-75, and Met-84–Tyr-104.

It belongs to the complex I subunit 3 family. As to quaternary structure, core subunit of respiratory chain NADH dehydrogenase (Complex I) which is composed of 45 different subunits. Interacts with TMEM186. Interacts with TMEM242.

The protein localises to the mitochondrion inner membrane. The enzyme catalyses a ubiquinone + NADH + 5 H(+)(in) = a ubiquinol + NAD(+) + 4 H(+)(out). Functionally, core subunit of the mitochondrial membrane respiratory chain NADH dehydrogenase (Complex I) which catalyzes electron transfer from NADH through the respiratory chain, using ubiquinone as an electron acceptor. Essential for the catalytic activity of complex I. The protein is NADH-ubiquinone oxidoreductase chain 3 of Reithrodon auritus (Bunny rat).